The primary structure comprises 303 residues: D-alanine--D-alanine ligase (303 aa).

The ATP-grasp domain maps to 99–293; that stretch reads TYRFLKDIVE…FEELVEIILK (195 aa). 125–176 lines the ATP pocket; the sequence is GYPCVVKPRREGSSIGVFICESDEEFQHALKEDLPRYGSVIVQKYIPGREMT. Mg(2+) contacts are provided by aspartate 248, glutamate 260, and asparagine 262.

The protein belongs to the D-alanine--D-alanine ligase family. The cofactor is Mg(2+). Mn(2+) is required as a cofactor.

Its subcellular location is the cytoplasm. It catalyses the reaction 2 D-alanine + ATP = D-alanyl-D-alanine + ADP + phosphate + H(+). Its pathway is cell wall biogenesis; peptidoglycan biosynthesis. Functionally, cell wall formation. The polypeptide is D-alanine--D-alanine ligase (Thermotoga petrophila (strain ATCC BAA-488 / DSM 13995 / JCM 10881 / RKU-1)).